We begin with the raw amino-acid sequence, 338 residues long: Heat-inducible transcription repressor HrcA (338 aa).

This sequence belongs to the HrcA family.

Its function is as follows. Negative regulator of class I heat shock genes (grpE-dnaK-dnaJ and groELS operons). Prevents heat-shock induction of these operons. This Thermotoga petrophila (strain ATCC BAA-488 / DSM 13995 / JCM 10881 / RKU-1) protein is Heat-inducible transcription repressor HrcA.